Reading from the N-terminus, the 677-residue chain is Methionine--tRNA ligase (677 aa).

Residues 15 to 25 (PYANGSIHLGH) carry the 'HIGH' region motif. Zn(2+) contacts are provided by cysteine 146, cysteine 149, cysteine 159, and cysteine 162. A 'KMSKS' region motif is present at residues 333–337 (KMSKS). Lysine 336 contributes to the ATP binding site. Residues 575–677 (DFAKVDLRVA…DGAKPGQQVK (103 aa)) enclose the tRNA-binding domain.

The protein belongs to the class-I aminoacyl-tRNA synthetase family. MetG type 1 subfamily. Homodimer. Requires Zn(2+) as cofactor.

It is found in the cytoplasm. The catalysed reaction is tRNA(Met) + L-methionine + ATP = L-methionyl-tRNA(Met) + AMP + diphosphate. Functionally, is required not only for elongation of protein synthesis but also for the initiation of all mRNA translation through initiator tRNA(fMet) aminoacylation. The polypeptide is Methionine--tRNA ligase (Citrobacter koseri (strain ATCC BAA-895 / CDC 4225-83 / SGSC4696)).